A 216-amino-acid chain; its full sequence is Imidazole glycerol phosphate synthase subunit HisH (216 aa).

Residues 2–216 (RVAIIDYGSG…LISNFLRWKP (215 aa)) form the Glutamine amidotransferase type-1 domain. The active-site Nucleophile is Cys88. Catalysis depends on residues His196 and Glu198.

Heterodimer of HisH and HisF.

The protein resides in the cytoplasm. The enzyme catalyses 5-[(5-phospho-1-deoxy-D-ribulos-1-ylimino)methylamino]-1-(5-phospho-beta-D-ribosyl)imidazole-4-carboxamide + L-glutamine = D-erythro-1-(imidazol-4-yl)glycerol 3-phosphate + 5-amino-1-(5-phospho-beta-D-ribosyl)imidazole-4-carboxamide + L-glutamate + H(+). It catalyses the reaction L-glutamine + H2O = L-glutamate + NH4(+). It functions in the pathway amino-acid biosynthesis; L-histidine biosynthesis; L-histidine from 5-phospho-alpha-D-ribose 1-diphosphate: step 5/9. IGPS catalyzes the conversion of PRFAR and glutamine to IGP, AICAR and glutamate. The HisH subunit catalyzes the hydrolysis of glutamine to glutamate and ammonia as part of the synthesis of IGP and AICAR. The resulting ammonia molecule is channeled to the active site of HisF. The protein is Imidazole glycerol phosphate synthase subunit HisH of Agrobacterium fabrum (strain C58 / ATCC 33970) (Agrobacterium tumefaciens (strain C58)).